The chain runs to 391 residues: Homocysteine-responsive endoplasmic reticulum-resident ubiquitin-like domain member 1 protein (391 aa).

Met1 is modified (N-acetylmethionine). At Met1–Asp263 the chain is on the cytoplasmic side. Positions Val10–Leu72 constitute a Ubiquitin-like domain. Residues Asn90–Arg126 are disordered. Polar residues predominate over residues Pro95 to Gly124. The interaction with UBQLN1 stretch occupies residues Gln115–Ser200. A Phosphoserine modification is found at Ser135. Residues Trp264–Tyr284 form a helical membrane-spanning segment. The Lumenal segment spans residues Ser285 to Arg289. A helical membrane pass occupies residues Phe290–Phe310. Residues Arg311 to Asn391 lie on the Cytoplasmic side of the membrane. The segment at Asn317–His361 is disordered. Over residues Asp346–His361 the composition is skewed to basic and acidic residues.

Interacts with PSEN1 and PSEN2. Interacts with UBXN6. Interacts with UBQLN1, UBQLN2 and UBQLN4. Component of the HRD1 complex, which comprises at least SYNV1/HRD1, FAM8A1, HERPUD1/HERP, OS9, SEL1L and UBE2J1. FAM8A1 binding to SYNV1 may promote recruitment of HERPUD1 to the HRD1 complex.

The protein localises to the endoplasmic reticulum membrane. Functionally, component of the endoplasmic reticulum quality control (ERQC) system also called ER-associated degradation (ERAD) involved in ubiquitin-dependent degradation of misfolded endoplasmic reticulum proteins. Binds to ubiquilins and this interaction is required for efficient degradation of CD3D via the ERAD pathway. The chain is Homocysteine-responsive endoplasmic reticulum-resident ubiquitin-like domain member 1 protein (Herpud1) from Mus musculus (Mouse).